The following is a 658-amino-acid chain: Glycogen debranching enzyme (658 aa).

Asp-336 functions as the Nucleophile in the catalytic mechanism. Glu-371 acts as the Proton donor in catalysis. Residues 460-484 (ANGEENRDGSNNNHSNNHGKEGLGG) form a disordered region.

It belongs to the glycosyl hydrolase 13 family.

The enzyme catalyses Hydrolysis of (1-&gt;6)-alpha-D-glucosidic linkages to branches with degrees of polymerization of three or four glucose residues in limit dextrin.. Its pathway is glycan degradation; glycogen degradation. In terms of biological role, removes maltotriose and maltotetraose chains that are attached by 1,6-alpha-linkage to the limit dextrin main chain, generating a debranched limit dextrin. This chain is Glycogen debranching enzyme, found in Escherichia fergusonii (strain ATCC 35469 / DSM 13698 / CCUG 18766 / IAM 14443 / JCM 21226 / LMG 7866 / NBRC 102419 / NCTC 12128 / CDC 0568-73).